The chain runs to 263 residues: Shikimate dehydrogenase (NADP(+)) (263 aa).

Shikimate is bound by residues 14-16 (SLS) and Thr60. Lys64 (proton acceptor) is an active-site residue. 2 residues coordinate shikimate: Asn85 and Asp100. NADP(+)-binding positions include 123–127 (GAGGA), 146–151 (NRTPQR), and Leu205. Shikimate is bound at residue Tyr207. Position 228 (Gly228) interacts with NADP(+).

Belongs to the shikimate dehydrogenase family. In terms of assembly, homodimer.

The catalysed reaction is shikimate + NADP(+) = 3-dehydroshikimate + NADPH + H(+). The protein operates within metabolic intermediate biosynthesis; chorismate biosynthesis; chorismate from D-erythrose 4-phosphate and phosphoenolpyruvate: step 4/7. Its function is as follows. Involved in the biosynthesis of the chorismate, which leads to the biosynthesis of aromatic amino acids. Catalyzes the reversible NADPH linked reduction of 3-dehydroshikimate (DHSA) to yield shikimate (SA). In Thermus thermophilus (strain ATCC BAA-163 / DSM 7039 / HB27), this protein is Shikimate dehydrogenase (NADP(+)).